The following is a 770-amino-acid chain: Arf-GAP with coiled-coil, ANK repeat and PH domain-containing protein 2 (770 aa).

The BAR domain maps to 6–226 (DFEECLKDSP…MKDLGAQLDR (221 aa)). Residues 266–361 (GIVMEGYLFK…WIKAVQTSIA (96 aa)) enclose the PH domain. The segment at 371–392 (SEKLDKKSSPSTGSLDSGSESK) is disordered. A compositionally biased stretch (low complexity) spans 379 to 388 (SPSTGSLDSG). Phosphoserine is present on residues S384 and S387. An Arf-GAP domain is found at 399–520 (ESALQRVQCI…KFVDKYSTLL (122 aa)). A C4-type zinc finger spans residues 414 to 437 (CCDCGLADPRWASINLGITLCIEC). A Phosphoserine modification is found at S521. Positions 548 to 561 (TPVKSNDSGIQQCS) are enriched in polar residues. A disordered region spans residues 548–571 (TPVKSNDSGIQQCSDDGRESLPST). Phosphoserine occurs at positions 573 and 576. ANK repeat units follow at residues 632 to 661 (NQAT…NVNQ), 665 to 694 (QGRG…NQHA), and 698 to 727 (EGKD…NEEM). At Y734 the chain carries Phosphotyrosine. S767 carries the phosphoserine modification.

As to quaternary structure, interacts with RAB35 (GTP-bound form); the interaction is direct and probably recruits ACAP2 to membranes. Interacts with MICALL1; the interaction is indirect through RAB35.

It is found in the endosome membrane. It localises to the cell membrane. Its activity is regulated as follows. GAP activity stimulated by phosphatidylinositol 4,5-bisphosphate (PIP2) and phosphatidic acid. GTPase-activating protein (GAP) for ADP ribosylation factor 6 (ARF6). Doesn't show GAP activity for RAB35. The polypeptide is Arf-GAP with coiled-coil, ANK repeat and PH domain-containing protein 2 (Acap2) (Rattus norvegicus (Rat)).